Here is a 371-residue protein sequence, read N- to C-terminus: Putative F-box protein At1g58090 (371 aa).

One can recognise an F-box domain in the interval 1–46 (MVSKKLPLDLEEEILFRVPPRSLVRFRSVCREWNTLFKNKRFINKN).

The chain is Putative F-box protein At1g58090 from Arabidopsis thaliana (Mouse-ear cress).